Consider the following 874-residue polypeptide: Oxysterol-binding protein-related protein 5 (874 aa).

Residues 1 to 71 (MKEEAFLRRR…PQTPGSATKV (71 aa)) are disordered. A Phosphoserine modification is found at Ser12. The stretch at 93–123 (VSKKDALKAQKENYRQEKKRATKQLFSALTD) forms a coiled coil. The region spanning 126-243 (VVIMADSLKI…WLDALELALR (118 aa)) is the PH domain. Disordered stretches follow at residues 255–277 (QGRD…GLPT) and 299–338 (FSDK…GPWR). Polar residues predominate over residues 261 to 277 (QGSSPDASPSSLYGLPT). Over residues 299–308 (FSDKSERENA) the composition is skewed to basic and acidic residues. Residues 383-388 (LSRVVL), 445-448 (KPYN), and 477-478 (HH) contribute to the a 1,2-diacyl-sn-glycero-3-phospho-(1D-myo-inositol 4-phosphate) site. A 1,2-diacyl-sn-glycero-3-phospho-L-serine contacts are provided by residues 383–388 (LSRVVL) and Asn448. Residue Ser503 coordinates a 1,2-diacyl-sn-glycero-3-phospho-L-serine. Residues 660–684 (GDQHKATQEKSVLEEAQRQRAREHQ) show a composition bias toward basic and acidic residues. Disordered stretches follow at residues 660–685 (GDQH…EHQQ) and 739–798 (GQTT…GGES). A 1,2-diacyl-sn-glycero-3-phospho-(1D-myo-inositol 4-phosphate)-binding residues include Lys669, Glu673, and Arg677. Phosphoserine occurs at positions 746 and 749. A compositionally biased stretch (basic and acidic residues) spans 754–764 (PSSDRRLRKAS). Residues 765–782 (DQPSGHSQVTESSGSTPE) are compositionally biased toward polar residues. The helical transmembrane segment at 855 to 873 (SWFLLCIFLTCQLFINYIL) threads the bilayer.

This sequence belongs to the OSBP family.

The protein localises to the endoplasmic reticulum membrane. In terms of biological role, lipid transporter involved in lipid countertransport between the endoplasmic reticulum and the plasma membrane: specifically exchanges phosphatidylserine with phosphatidylinositol 4-phosphate (PI4P), delivering phosphatidylserine to the plasma membrane in exchange for PI4P, which is degraded by the SAC1/SACM1L phosphatase in the endoplasmic reticulum. Binds phosphatidylserine and PI4P in a mutually exclusive manner. May cooperate with NPC1 to mediate the exit of cholesterol from endosomes/lysosomes. Binds 25-hydroxycholesterol and cholesterol. This Mus musculus (Mouse) protein is Oxysterol-binding protein-related protein 5 (Osbpl5).